The following is a 519-amino-acid chain: Circadian clock oscillator protein KaiC (519 aa).

KaiC domains lie at 1-246 and 260-519; these read MSEK…VNIF and VRVS…GSDS. Residues Gly48, Thr49, Gly50, Lys51, Thr52, Leu53, Lys223, Leu224, Arg225, Thr227, His229, Thr239, Thr289, Gly290, Thr291, Gly292, Lys293, Thr294, and Leu295 each contribute to the ATP site. A Mg(2+)-binding site is contributed by Thr52. Thr294 provides a ligand contact to Mg(2+). Mg(2+) is bound at residue Glu317. Trp330 serves as a coordination point for ATP. Residue Ser430 is modified to Phosphoserine; by autocatalysis. At Thr431 the chain carries Phosphothreonine; by autocatalysis. The ATP site is built by Arg450, Lys456, Met457, Arg458, Ser460, His462, and Lys464.

This sequence belongs to the KaiC family. As to quaternary structure, homohexamer; hexamerization is dependent on ATP-binding. The KaiABC complex composition changes during the circadian cycle to control KaiC phosphorylation. Complexes KaiC(6), KaiA(2-4):KaiC(6), KaiB(6):KaiC(6) and KaiC(6):KaiB(6):KaiA(12) are among the most important forms, many form cooperatively. KaiC interacts with SasA, activating its autokinase function and leading to RpaA activation. Requires Mg(2+) as cofactor. In terms of processing, phosphorylated on serine and threonine residues by autocatalysis. Has a 4 step phosphorylation cycle; the autokinase acts first on Thr-431, then Ser-430. When Ser-430 is modified KaiC switches to an autophosphatase mode, acting first on phospho-Thr-431 then phospho-Ser-430.

It catalyses the reaction L-seryl-[protein] + ATP = O-phospho-L-seryl-[protein] + ADP + H(+). The enzyme catalyses L-threonyl-[protein] + ATP = O-phospho-L-threonyl-[protein] + ADP + H(+). It carries out the reaction ATP + H2O = ADP + phosphate + H(+). The interaction with KaiA enhances its phosphorylation status, while the interaction with KaiB decreases it. Central component of the KaiABC oscillator complex, which constitutes the main circadian regulator in cyanobacteria. Complex composition changes during the circadian cycle to control KaiC phosphorylation. KaiA stimulates KaiC autophosphorylation, while KaiB sequesters KaiA, leading to KaiC autodephosphorylation. Clock output pathways impact the RpaA transcriptional regulator. KaiC enhances the autophosphorylation activity of SasA, which then transfers its phosphate group to RpaA to activate it. KaiB and KaiC together enhance the phospho-RpaA dephosphatase activity of CikA. In terms of biological role, has a weak, temperature-independent ATPase activity; ATPase activity defines the circadian period. The phosphorylation state of KaiC modulates its ATPase activity and effects KaiB binding. The chain is Circadian clock oscillator protein KaiC from Nostoc sp. (strain PCC 7120 / SAG 25.82 / UTEX 2576).